Consider the following 394-residue polypeptide: MSREMQDVDLAEVKPLVEKGETITSLLQEFDVQEQDIETLHGSVHVTLCGTPKGNRPVILTYHDIGMNHKTCYNPLFNYEDMQEITQHFAVCHVDAPGQQDGAASFPAGYMYPSMDQLAEMLPGVLQQFGLKSIIGMGTGAGAYILTRFALNNPEMVEGLVLINVNPCAEGWMDWAASKISGWTQALPDMVVSHLFGKEEMHSNVEVVHTYRQHIVNDMNPGNLHLFINAYNSRRDLEIERPMPGTHTVTLQCPALLVVGDSSPAVDAVVECNSKLDPTKTTLLKMADCGGLPQISQPAKLAEAFKYFVQGMGYMPSASMTRLMRSRTASGSSVTSLDGTRSRSHTSEGTRSRSHTSEGTRSRSHTSEGAHLDITPNSGAAGNNAGPKSMEVSC.

Serine 2 carries the post-translational modification N-acetylserine. Phosphoserine is present on residues serine 2, serine 319, and serine 326. The interval 325-394 (RSRTASGSSV…AGPKSMEVSC (70 aa)) is disordered. Polar residues predominate over residues 327–339 (RTASGSSVTSLDG). Threonine 328 carries the phosphothreonine; by SGK1 modification. Serine 330 and serine 332 each carry phosphoserine; by SGK1. Serine 333 carries the post-translational modification Phosphoserine. Position 335 is a phosphothreonine (threonine 335). Residue serine 336 is modified to Phosphoserine. A run of 3 repeats spans residues 339–348 (GTRSRSHTSE), 349–358 (GTRSRSHTSE), and 359–368 (GTRSRSHTSE). The 3 X 10 AA tandem repeats of G-[PST]-R-S-R-S-H-T-S-E stretch occupies residues 339 to 368 (GTRSRSHTSEGTRSRSHTSEGTRSRSHTSE). Position 340 is a phosphothreonine (threonine 340). A Phosphoserine modification is found at serine 342. A compositionally biased stretch (basic and acidic residues) spans 345–371 (HTSEGTRSRSHTSEGTRSRSHTSEGAH). Position 346 is a phosphothreonine; by SGK1 (threonine 346). Residue serine 352 is modified to Phosphoserine. Threonine 356 carries the post-translational modification Phosphothreonine; by SGK1. 2 positions are modified to phosphoserine: serine 362 and serine 364. Threonine 366 and threonine 375 each carry phosphothreonine.

Belongs to the NDRG family. As to quaternary structure, interacts with RAB4A (membrane-bound form); the interaction involves NDRG1 in vesicular recycling ofCDH1. Interacts with APOA1, APOA2, PRA1 and RTN1. In terms of processing, under stress conditions, phosphorylated in the C-terminal on many serine and threonine residues. Phosphorylated in vitro by PKA. Phosphorylation enhanced by increased intracellular cAMP levels. Homocysteine induces dephosphorylation. Phosphorylation by SGK1 is cell cycle dependent.

It localises to the cytoplasm. The protein resides in the cytosol. Its subcellular location is the cytoskeleton. The protein localises to the microtubule organizing center. It is found in the centrosome. It localises to the nucleus. The protein resides in the cell membrane. Its function is as follows. Stress-responsive protein involved in hormone responses, cell growth, and differentiation. Acts as a tumor suppressor in many cell types. Necessary but not sufficient for p53/TP53-mediated caspase activation and apoptosis. Has a role in cell trafficking notably of the Schwann cell and is necessary for the maintenance and development of the peripheral nerve myelin sheath. Required for vesicular recycling of CDH1 and TF. May also function in lipid trafficking. Protects cells from spindle disruption damage. Functions in p53/TP53-dependent mitotic spindle checkpoint. Regulates microtubule dynamics and maintains euploidy. The chain is Protein NDRG1 (Ndrg1) from Macaca fascicularis (Crab-eating macaque).